The chain runs to 76 residues: Exodeoxyribonuclease 7 small subunit (76 aa).

This sequence belongs to the XseB family. As to quaternary structure, heterooligomer composed of large and small subunits.

The protein resides in the cytoplasm. It catalyses the reaction Exonucleolytic cleavage in either 5'- to 3'- or 3'- to 5'-direction to yield nucleoside 5'-phosphates.. Functionally, bidirectionally degrades single-stranded DNA into large acid-insoluble oligonucleotides, which are then degraded further into small acid-soluble oligonucleotides. The chain is Exodeoxyribonuclease 7 small subunit from Bacillus cereus (strain ATCC 14579 / DSM 31 / CCUG 7414 / JCM 2152 / NBRC 15305 / NCIMB 9373 / NCTC 2599 / NRRL B-3711).